The primary structure comprises 86 residues: Probable weak neurotoxin NNAM3 (86 aa).

A signal peptide spans 1-21 (MKTLLLTLVVVTIVCLDLGYT). 5 cysteine pairs are disulfide-bonded: cysteine 24–cysteine 45, cysteine 27–cysteine 32, cysteine 38–cysteine 63, cysteine 67–cysteine 78, and cysteine 79–cysteine 84.

Belongs to the three-finger toxin family. Ancestral subfamily. Orphan group II sub-subfamily. As to expression, expressed by the venom gland.

It localises to the secreted. Its function is as follows. Binds with low affinity to muscular (alpha-1-beta-1-delta-epsilon/CHRNA1-CHRNB1-CHRND-CHRNE) and very low affinity to neuronal (alpha-7/CHRNA7) nicotinic acetylcholine receptor (nAChR). The sequence is that of Probable weak neurotoxin NNAM3 from Naja atra (Chinese cobra).